A 485-amino-acid polypeptide reads, in one-letter code: Lysine--tRNA ligase (485 aa).

The Mg(2+) site is built by Glu391 and Glu398.

This sequence belongs to the class-II aminoacyl-tRNA synthetase family. As to quaternary structure, homodimer. It depends on Mg(2+) as a cofactor.

The protein localises to the cytoplasm. It catalyses the reaction tRNA(Lys) + L-lysine + ATP = L-lysyl-tRNA(Lys) + AMP + diphosphate. The chain is Lysine--tRNA ligase from Blochmanniella floridana.